Consider the following 66-residue polypeptide: Cytochrome c oxidase polypeptide VIII, mitochondrial (66 aa).

The N-terminal 17 residues, 1 to 17 (MLRYSLQARSALRGVRF), are a transit peptide targeting the mitochondrion. Residues 18–38 (SSSHSAPKPGSTIPFYINKKP) lie on the Mitochondrial matrix side of the membrane. The chain crosses the membrane as a helical span at residues 39-59 (LPTLLYFGTFGVIFSIPFIVV). Over 60–66 (KYHNRNL) the chain is Mitochondrial intermembrane.

Belongs to the cytochrome c oxidase VIIc family. As to quaternary structure, component of the cytochrome c oxidase (complex IV, CIV), a multisubunit enzyme composed of a catalytic core of 3 subunits and several supernumerary subunits. The complex exists as a monomer or a dimer and forms supercomplexes (SCs) in the inner mitochondrial membrane with ubiquinol-cytochrome c oxidoreductase (cytochrome b-c1 complex, complex III, CIII).

It is found in the mitochondrion inner membrane. It functions in the pathway energy metabolism; oxidative phosphorylation. In terms of biological role, component of the cytochrome c oxidase, the last enzyme in the mitochondrial electron transport chain which drives oxidative phosphorylation. The respiratory chain contains 3 multisubunit complexes succinate dehydrogenase (complex II, CII), ubiquinol-cytochrome c oxidoreductase (cytochrome b-c1 complex, complex III, CIII) and cytochrome c oxidase (complex IV, CIV), that cooperate to transfer electrons derived from NADH and succinate to molecular oxygen, creating an electrochemical gradient over the inner membrane that drives transmembrane transport and the ATP synthase. Cytochrome c oxidase is the component of the respiratory chain that catalyzes the reduction of oxygen to water. Electrons originating from reduced cytochrome c in the intermembrane space (IMS) are transferred via the dinuclear copper A center (CU(A)) of subunit 2 and heme A of subunit 1 to the active site in subunit 1, a binuclear center (BNC) formed by heme A3 and copper B (CU(B)). The BNC reduces molecular oxygen to 2 water molecules using 4 electrons from cytochrome c in the IMS and 4 protons from the mitochondrial matrix. The polypeptide is Cytochrome c oxidase polypeptide VIII, mitochondrial (cox8) (Schizosaccharomyces pombe (strain 972 / ATCC 24843) (Fission yeast)).